Consider the following 495-residue polypeptide: Lysine--tRNA ligase (495 aa).

Mg(2+)-binding residues include glutamate 406 and glutamate 413.

The protein belongs to the class-II aminoacyl-tRNA synthetase family. Homodimer. Mg(2+) serves as cofactor.

Its subcellular location is the cytoplasm. It catalyses the reaction tRNA(Lys) + L-lysine + ATP = L-lysyl-tRNA(Lys) + AMP + diphosphate. In Staphylococcus aureus (strain MRSA252), this protein is Lysine--tRNA ligase.